We begin with the raw amino-acid sequence, 58 residues long: Photosystem II reaction center protein K (58 aa).

The propeptide occupies 1–21; that stretch reads MLAIFNIYLDNAFHLNGIILA. Residues 29 to 49 traverse the membrane as a helical segment; that stretch reads IFDPIVDVMPIIPVFFFLLAF.

Belongs to the PsbK family. In terms of assembly, PSII is composed of 1 copy each of membrane proteins PsbA, PsbB, PsbC, PsbD, PsbE, PsbF, PsbH, PsbI, PsbJ, PsbK, PsbL, PsbM, PsbT, PsbX, PsbY, PsbZ, Psb30/Ycf12, at least 3 peripheral proteins of the oxygen-evolving complex and a large number of cofactors. It forms dimeric complexes.

The protein resides in the plastid. The protein localises to the chloroplast thylakoid membrane. One of the components of the core complex of photosystem II (PSII). PSII is a light-driven water:plastoquinone oxidoreductase that uses light energy to abstract electrons from H(2)O, generating O(2) and a proton gradient subsequently used for ATP formation. It consists of a core antenna complex that captures photons, and an electron transfer chain that converts photonic excitation into a charge separation. The protein is Photosystem II reaction center protein K of Physcomitrium patens (Spreading-leaved earth moss).